The sequence spans 383 residues: MSPEVALNRISPMLSPFISSVVRNGKVGLDATNCLRITDLKSGCTSLTPGPNCDRFKLHIPYAGETLKWDIIFNAQYPELPPDFIFGEDAEFLPDPSALHNLASWNPSNPECLLLVVKELVQQYHQFQCSRLRESSRLMFEYQTLLEEPQYGENMEIYAGKKNNWTGEFSARFLLKLPVDFSNIPTYLLKDVNEDPGEDVALLSVSFEDTEATQVYPKLYLSPRIEHALGGSSALHIPAFPGGGCLIDYVPQVCHLLTNKVQYVIQGYHKRREYIAAFLSHFGTGVVEYDAEGFTKLTLLLMWKDFCFLVHIDLPLFFPRDQPTLTFQSVYHFTNSGQLYSQAQKNYPYSPRWDGNEMAKRAKAYFKTFVPQFQEAAFANGKL.

The residue at position 1 (Met1) is an N-acetylmethionine. Residue Ser2 is modified to Phosphoserine. 2 UEV-like regions span residues 30-147 (DATN…TLLE) and 275-364 (IAAF…RAKA).

It belongs to the BABAM2 family. As to quaternary structure, component of the ARISC complex, at least composed of UIMC1/RAP80, ABRAXAS1, BRCC3/BRCC36, BABAM2 and BABAM1/NBA1. Component of the BRCA1-A complex, at least composed of BRCA1, BARD1, UIMC1/RAP80, ABRAXAS1, BRCC3/BRCC36, BABAM2 and BABAM1/NBA1. In the BRCA1-A complex, interacts directly with ABRAXAS1, BRCC3/BRCC36 and BABAM1/NBA1. Binds polyubiquitin. Component of the BRISC complex, at least composed of ABRAXAS2, BRCC3/BRCC36, BABAM2 and BABAM1/NBA1. Identified in a complex with SHMT2 and the other subunits of the BRISC complex. Component of the BRCA1/BRCA2 containing complex (BRCC), which also contains BRCA1, BRCA2, BARD1, BRCC3/BRCC36 and RAD51. BRCC is a ubiquitin E3 ligase complex that enhances cellular survival following DNA damage. May interact with FAS and TNFRSF1A.

It is found in the cytoplasm. The protein localises to the nucleus. Functionally, component of the BRCA1-A complex, a complex that specifically recognizes 'Lys-63'-linked ubiquitinated histones H2A and H2AX at DNA lesions sites, leading to target the BRCA1-BARD1 heterodimer to sites of DNA damage at double-strand breaks (DSBs). The BRCA1-A complex also possesses deubiquitinase activity that specifically removes 'Lys-63'-linked ubiquitin on histones H2A and H2AX. In the BRCA1-A complex, it acts as an adapter that bridges the interaction between BABAM1/NBA1 and the rest of the complex, thereby being required for the complex integrity and modulating the E3 ubiquitin ligase activity of the BRCA1-BARD1 heterodimer. Component of the BRISC complex, a multiprotein complex that specifically cleaves 'Lys-63'-linked ubiquitin in various substrates. Within the BRISC complex, acts as an adapter that bridges the interaction between BABAM1/NBA1 and the rest of the complex, thereby being required for the complex integrity. The BRISC complex is required for normal mitotic spindle assembly and microtubule attachment to kinetochores via its role in deubiquitinating NUMA1. The BRISC complex plays a role in interferon signaling via its role in the deubiquitination of the interferon receptor IFNAR1; deubiquitination increases IFNAR1 activity by enhancing its stability and cell surface expression. Down-regulates the response to bacterial lipopolysaccharide (LPS) via its role in IFNAR1 deubiquitination. May play a role in homeostasis or cellular differentiation in cells of neural, epithelial and germline origins. May also act as a death receptor-associated anti-apoptotic protein, which inhibits the mitochondrial apoptotic pathway. May regulate TNF-alpha signaling through its interactions with TNFRSF1A; however these effects may be indirect. In Bos taurus (Bovine), this protein is BRISC and BRCA1-A complex member 2 (BABAM2).